Consider the following 131-residue polypeptide: Large ribosomal subunit protein bL17 (131 aa).

Belongs to the bacterial ribosomal protein bL17 family. As to quaternary structure, part of the 50S ribosomal subunit. Contacts protein L32.

In Methylobacillus flagellatus (strain ATCC 51484 / DSM 6875 / VKM B-1610 / KT), this protein is Large ribosomal subunit protein bL17.